Here is a 371-residue protein sequence, read N- to C-terminus: GDP-mannose transporter (371 aa).

Residues 1–51 (MGVISFYLIGQLLYLIRKKYTTTYRQQQQHQYNMDSKHSTSSSSSGSLATR) lie on the Cytoplasmic side of the membrane. The helical transmembrane segment at 52–72 (ISNSGPISIAAYCLSSILMTV) threads the bilayer. Residues 73–80 (TNKYVLSG) lie on the Lumenal side of the membrane. A helical transmembrane segment spans residues 81-101 (FSFNLNFFLLAVQSIVCIVTI). Residues 102–121 (GSLKSLNIITYRQFNKDEAK) are Cytoplasmic-facing. A helical transmembrane segment spans residues 122 to 138 (KWSPIAFLLVAMIYTSS). Residues 139–145 (KALQYLS) are Lumenal-facing. A helical membrane pass occupies residues 146 to 162 (IPVYTIFKNLTIILIAY). Residues 163-171 (GEVIWFGGK) lie on the Cytoplasmic side of the membrane. A helical transmembrane segment spans residues 172 to 192 (VTTMALSSFLLMVLSSVIAYY). Residues 193-206 (GDNAAVKSHDDAFA) lie on the Lumenal side of the membrane. Residues 207 to 227 (LYLGYFWMLTNCFASAAFVLI) form a helical membrane-spanning segment. Residues 228-241 (MRKRIKLTNFKDFD) lie on the Cytoplasmic side of the membrane. Residues 242–262 (TMYYNNLLSIPILLICSFIFE) traverse the membrane as a helical segment. Over 263-281 (DWSSANVSLNFPADNRVTT) the chain is Lumenal. The N-linked (GlcNAc...) asparagine glycan is linked to Asn-268. The chain crosses the membrane as a helical span at residues 282–302 (ITAMILSGASSVGISYCSAWC). The Cytoplasmic segment spans residues 303 to 309 (VRVTSST). Residues 310 to 329 (TYSMVGALNKLPIALSGLIF) traverse the membrane as a helical segment. Residues 330 to 332 (FEA) are Lumenal-facing. The helical transmembrane segment at 333–355 (AVNFWSVSSIFVGFGAGLVYAVA) threads the bilayer. The Cytoplasmic segment spans residues 356-371 (KQKQQKEQSQQLPTTK).

Belongs to the TPT transporter family. SLC35D subfamily. Homooligomer.

Its subcellular location is the golgi apparatus membrane. It localises to the cytoplasmic vesicle membrane. It is found in the endoplasmic reticulum membrane. Involved in the import of GDP-mannose from the cytoplasm into the Golgi lumen. Involved in hyphal formation. The polypeptide is GDP-mannose transporter (VRG4) (Candida albicans (strain SC5314 / ATCC MYA-2876) (Yeast)).